Reading from the N-terminus, the 233-residue chain is B-cell lymphoma/leukemia 10 (233 aa).

N-acetylmethionine is present on methionine 1. The CARD domain maps to 13 to 101; the sequence is LTEVKKDALE…QNFLIQKITD (89 aa). Glycyl lysine isopeptide (Lys-Gly) (interchain with G-Cter in ubiquitin) cross-links involve residues lysine 17, lysine 31, and lysine 63. Residue serine 138 is modified to Phosphoserine. Positions 187-233 are disordered; that stretch reads FSSTTLPRPGDPGAPPLPPDLQLEEEGTCANSSEMFLPLRSRTVSRQ. The segment covering 195-205 has biased composition (pro residues); it reads PGDPGAPPLPP.

In terms of assembly, homomultimer; homooligomerized following recruitment by CARD domain-containing proteins that form a nucleating helical template that recruits BCL10 via CARD-CARD interaction. Self-associates by CARD-CARD interaction and interacts with other CARD-proteins such as CARD9, CARD10, CARD11 and CARD14. Forms a complex with CARD14 and MALT1; resulting in the formation of a CBM (CARD14-BCL10-MALT1) complex. Forms a complex with CARD11 and MALT1; resulting in the formation of a CBM (CARD11-BCL10-MALT1) complex. Forms a complex with CARD9 and MALT1; resulting in the formation of a CBM (CARD9-BCL10-MALT1) complex. Found in a membrane raft complex, at least composed of BCL10, CARD11, DPP4 and IKBKB. Binds caspase-9 with its C-terminal domain. Interacts with TRAF2 and BIRC2/c-IAP2. Interacts with PELI2 and SOCS3; these interactions may be mutually exclusive. In terms of processing, phosphorylated. Phosphorylation results in dissociation from TRAF2 and binding to BIRC2/c-IAP2. Phosphorylated by IKBKB/IKKB. Post-translationally, ubiquitinated via both 'Lys-63'-linked and linear ('Met-1'-linked) polyubiquitin chains in response to T-cell receptor (TCR) activation. Ubiquitination is recognized by IKBKG/NEMO, the regulatory subunit of I-kappa-B kinase (IKK), and is required for TCR-induced NF-kappa-B activation. Linear ubiquitination at Lys-17, Lys-31 and Lys-63 is mediated by RNF31/HOIP; linear ubiquitination is recognized with much higher affinity than 'Lys-63'-linked ubiquitin by IKBKG/NEMO. CARD11 is required for linear ubiquitination by HOIP by promoting the targeting of BCL10 to RNF31/HOIP. Proteolytically cleaved by MALT1; required for T-cell activation. Ubiquitous.

The protein localises to the cytoplasm. The protein resides in the perinuclear region. It localises to the membrane raft. Its function is as follows. Plays a key role in both adaptive and innate immune signaling by bridging CARD domain-containing proteins to immune activation. Acts by channeling adaptive and innate immune signaling downstream of CARD domain-containing proteins CARD9, CARD11 and CARD14 to activate NF-kappa-B and MAP kinase p38 (MAPK11, MAPK12, MAPK13 and/or MAPK14) pathways which stimulate expression of genes encoding pro-inflammatory cytokines and chemokines. Recruited by activated CARD domain-containing proteins: homooligomerized CARD domain-containing proteins form a nucleating helical template that recruits BCL10 via CARD-CARD interaction, thereby promoting polymerization of BCL10, subsequent recruitment of MALT1 and formation of a CBM complex. This leads to activation of NF-kappa-B and MAP kinase p38 (MAPK11, MAPK12, MAPK13 and/or MAPK14) pathways which stimulate expression of genes encoding pro-inflammatory cytokines and chemokines. Activated by CARD9 downstream of C-type lectin receptors; CARD9-mediated signals are essential for antifungal immunity. Activated by CARD11 downstream of T-cell receptor (TCR) and B-cell receptor (BCR). Promotes apoptosis, pro-caspase-9 maturation and activation of NF-kappa-B via NIK and IKK. The chain is B-cell lymphoma/leukemia 10 from Homo sapiens (Human).